Reading from the N-terminus, the 912-residue chain is Transferrin-binding protein A (912 aa).

The first 23 residues, 1–23, serve as a signal peptide directing secretion; that stretch reads MTKKPYFRLSIISCLLISCYVKA. A TonB box motif is present at residues 50–57; it reads ETISVTAE. The TBDR plug domain occupies 63–188; sequence KDNEVTGLGK…LAGSVTFQSK (126 aa). Positions 199–912 constitute a TBDR beta-barrel domain; it reads SWGIQTKNAY…NYTLTLEMKF (714 aa). The TonB C-terminal box signature appears at 895 to 912; it reads TRYAASGRNYTLTLEMKF.

This sequence belongs to the TonB-dependent receptor family.

It localises to the cell outer membrane. Its function is as follows. Haemophilus acquires iron by extracting it from serum transferrin (TF) in its human host. Acts as a transferrin receptor and is required for transferrin utilization. The polypeptide is Transferrin-binding protein A (Haemophilus influenzae (strain ATCC 51907 / DSM 11121 / KW20 / Rd)).